The sequence spans 185 residues: ATP synthase subunit b (185 aa).

A helical membrane pass occupies residues 28–48 (VVLVGFAVLMYIVVKFVVPMF).

This sequence belongs to the ATPase B chain family. As to quaternary structure, F-type ATPases have 2 components, F(1) - the catalytic core - and F(0) - the membrane proton channel. F(1) has five subunits: alpha(3), beta(3), gamma(1), delta(1), epsilon(1). F(0) has three main subunits: a(1), b(2) and c(10-14). The alpha and beta chains form an alternating ring which encloses part of the gamma chain. F(1) is attached to F(0) by a central stalk formed by the gamma and epsilon chains, while a peripheral stalk is formed by the delta and b chains.

The protein resides in the cell membrane. Its function is as follows. F(1)F(0) ATP synthase produces ATP from ADP in the presence of a proton or sodium gradient. F-type ATPases consist of two structural domains, F(1) containing the extramembraneous catalytic core and F(0) containing the membrane proton channel, linked together by a central stalk and a peripheral stalk. During catalysis, ATP synthesis in the catalytic domain of F(1) is coupled via a rotary mechanism of the central stalk subunits to proton translocation. In terms of biological role, component of the F(0) channel, it forms part of the peripheral stalk, linking F(1) to F(0). The polypeptide is ATP synthase subunit b (Paenarthrobacter aurescens (strain TC1)).